The sequence spans 287 residues: Phosphatidylserine decarboxylase proenzyme (287 aa).

Active-site charge relay system; for autoendoproteolytic cleavage activity residues include Asp-90, His-147, and Ser-252. Ser-252 serves as the catalytic Schiff-base intermediate with substrate; via pyruvic acid; for decarboxylase activity. Pyruvic acid (Ser); by autocatalysis is present on Ser-252.

The protein belongs to the phosphatidylserine decarboxylase family. PSD-B subfamily. Prokaryotic type I sub-subfamily. As to quaternary structure, heterodimer of a large membrane-associated beta subunit and a small pyruvoyl-containing alpha subunit. Pyruvate is required as a cofactor. Is synthesized initially as an inactive proenzyme. Formation of the active enzyme involves a self-maturation process in which the active site pyruvoyl group is generated from an internal serine residue via an autocatalytic post-translational modification. Two non-identical subunits are generated from the proenzyme in this reaction, and the pyruvate is formed at the N-terminus of the alpha chain, which is derived from the carboxyl end of the proenzyme. The autoendoproteolytic cleavage occurs by a canonical serine protease mechanism, in which the side chain hydroxyl group of the serine supplies its oxygen atom to form the C-terminus of the beta chain, while the remainder of the serine residue undergoes an oxidative deamination to produce ammonia and the pyruvoyl prosthetic group on the alpha chain. During this reaction, the Ser that is part of the protease active site of the proenzyme becomes the pyruvoyl prosthetic group, which constitutes an essential element of the active site of the mature decarboxylase.

The protein resides in the cell membrane. It catalyses the reaction a 1,2-diacyl-sn-glycero-3-phospho-L-serine + H(+) = a 1,2-diacyl-sn-glycero-3-phosphoethanolamine + CO2. It participates in phospholipid metabolism; phosphatidylethanolamine biosynthesis; phosphatidylethanolamine from CDP-diacylglycerol: step 2/2. Functionally, catalyzes the formation of phosphatidylethanolamine (PtdEtn) from phosphatidylserine (PtdSer). The sequence is that of Phosphatidylserine decarboxylase proenzyme from Pseudomonas putida (strain ATCC 700007 / DSM 6899 / JCM 31910 / BCRC 17059 / LMG 24140 / F1).